Here is a 173-residue protein sequence, read N- to C-terminus: Photosystem I assembly protein Ycf3 (173 aa).

TPR repeat units follow at residues 35–68 (AFAYYRDGMSAQGDGEYAEALENYQEALRLEEDP), 72–105 (AFILYNMALVYASNGEHNRALEQYEQALALNAKM), and 120–153 (GSIAQEKGESDEADRRFDLAADFWSKAIRLAPNN).

The protein belongs to the Ycf3 family.

It localises to the cellular thylakoid membrane. Functionally, essential for the assembly of the photosystem I (PSI) complex. May act as a chaperone-like factor to guide the assembly of the PSI subunits. This Synechococcus sp. (strain RCC307) protein is Photosystem I assembly protein Ycf3.